Consider the following 367-residue polypeptide: DNA replication and repair protein RecF (367 aa).

30-37 (GNNGEGKT) lines the ATP pocket.

It belongs to the RecF family.

Its subcellular location is the cytoplasm. In terms of biological role, the RecF protein is involved in DNA metabolism; it is required for DNA replication and normal SOS inducibility. RecF binds preferentially to single-stranded, linear DNA. It also seems to bind ATP. The polypeptide is DNA replication and repair protein RecF (Leptospira biflexa serovar Patoc (strain Patoc 1 / Ames)).